The following is a 617-amino-acid chain: 1-deoxy-D-xylulose-5-phosphate synthase (617 aa).

Residues H77 and 118-120 (GHS) each bind thiamine diphosphate. D149 lines the Mg(2+) pocket. Residues 150-151 (GA), N178, Y286, and E367 each bind thiamine diphosphate. Position 178 (N178) interacts with Mg(2+).

This sequence belongs to the transketolase family. DXPS subfamily. As to quaternary structure, homodimer. It depends on Mg(2+) as a cofactor. The cofactor is thiamine diphosphate.

The enzyme catalyses D-glyceraldehyde 3-phosphate + pyruvate + H(+) = 1-deoxy-D-xylulose 5-phosphate + CO2. It participates in metabolic intermediate biosynthesis; 1-deoxy-D-xylulose 5-phosphate biosynthesis; 1-deoxy-D-xylulose 5-phosphate from D-glyceraldehyde 3-phosphate and pyruvate: step 1/1. Its function is as follows. Catalyzes the acyloin condensation reaction between C atoms 2 and 3 of pyruvate and glyceraldehyde 3-phosphate to yield 1-deoxy-D-xylulose-5-phosphate (DXP). In Actinobacillus pleuropneumoniae serotype 5b (strain L20), this protein is 1-deoxy-D-xylulose-5-phosphate synthase.